Reading from the N-terminus, the 163-residue chain is Putative pre-16S rRNA nuclease (163 aa).

This sequence belongs to the YqgF nuclease family.

The protein resides in the cytoplasm. Its function is as follows. Could be a nuclease involved in processing of the 5'-end of pre-16S rRNA. This is Putative pre-16S rRNA nuclease from Nitrobacter hamburgensis (strain DSM 10229 / NCIMB 13809 / X14).